A 250-amino-acid chain; its full sequence is Enoyl-[acyl-carrier-protein] reductase [NADPH] FabL (250 aa).

NADP(+) is bound by residues S13 to V16, A36 to S38, N62 to V63, and N89. Residues Y151 and K158 each act as proton acceptor in the active site. NADP(+) is bound by residues K158 and I187–T189.

It belongs to the short-chain dehydrogenases/reductases (SDR) family. Homotetramer.

The catalysed reaction is a 2,3-saturated acyl-[ACP] + NADP(+) = a (2E)-enoyl-[ACP] + NADPH + H(+). It catalyses the reaction (2E)-butenoyl-[ACP] + NADPH + H(+) = butanoyl-[ACP] + NADP(+). Its pathway is lipid metabolism; fatty acid biosynthesis. Inhibited by triclosan. Functionally, catalyzes the reduction of a carbon-carbon double bond in an enoyl moiety that is covalently linked to an acyl carrier protein (ACP). It confers resistance to triclosan. In Bacillus subtilis (strain 168), this protein is Enoyl-[acyl-carrier-protein] reductase [NADPH] FabL (fabL).